The sequence spans 473 residues: H(+)/Cl(-) exchange transporter ClcA (473 aa).

Over 1–32 (MKTDTPSLETPQAARLRRRQLIRQLLERDKTP) the chain is Cytoplasmic. The chain crosses the membrane as a helical span at residues 33-69 (LAILFMAAVVGTLVGLAAVAFDKGVAWLQNQRMEALV). Residues 70–76 (HTADNYP) are Periplasmic-facing. A helical membrane pass occupies residues 77–100 (LLLTVAFLCSAVLAMFGYFLVRKY). A Selectivity filter part_1 motif is present at residues 106–110 (GSGIP). Position 107 (Ser-107) interacts with chloride. Residues 109 to 116 (IPEIEGAL) constitute an intramembrane region (helical). Over 117-123 (EDQRPVR) the chain is Cytoplasmic. 2 helical membrane passes run 124–141 (WWRV…TLGG) and 148–166 (EGPT…LDIF). Residues 146–150 (GREGP) carry the Selectivity filter part_2 motif. The Cytoplasmic segment spans residues 167–176 (RLKGDEARHT). 2 consecutive intramembrane regions (helical) follow at residues 177-189 (LLAT…LAAA) and 193-201 (PLAGILFII). Topologically, residues 202-214 (EEMRPQFRYTLIS) are cytoplasmic. Residues 215–232 (IKAVFIGVIMSTIMYRIF) traverse the membrane as a helical segment. Over 233–252 (NHEVALIDVGKLSDAPLNTL) the chain is Periplasmic. Residues 253–281 (WLYLILGIIFGIFGPIFNKWVLGMQDLLH) traverse the membrane as a helical segment. At 282–287 (RVHGGN) the chain is on the cytoplasmic side. Residues 288–309 (ITKWVLMGGAIGGLCGLLGFVA) traverse the membrane as a helical segment. Residues 310–329 (PATSGGGFNLIPIATAGNFS) are Periplasmic-facing. The next 2 helical transmembrane spans lie at 330–349 (MGML…LCFS) and 355–376 (GIFA…MVVV). The Selectivity filter part_3 motif lies at 355 to 359 (GIFAP). Residues Ile-356 and Phe-357 each coordinate chloride. The Periplasmic segment spans residues 377-386 (ELFPQYHLEA). Residues 387–401 (GTFAIAGMGALLAAS) constitute an intramembrane region (helical). An intramembrane region (note=Loop between two helices) is located at residues 402–404 (IRA). Residues 405–416 (PLTGIILVLEMT) constitute an intramembrane region (helical). An intramembrane region (note=Loop between two helices) is located at residues 417 to 421 (DNYQL). A helical membrane pass occupies residues 422–438 (ILPMIITGLGATLLAQF). At 439–473 (TGGKPLYSEILARTLAKQEAEQLARSKAASASENT) the chain is on the cytoplasmic side. Chloride is bound at residue Tyr-445.

It belongs to the chloride channel (TC 2.A.49) family. ClcA subfamily. As to quaternary structure, homodimer.

The protein localises to the cell inner membrane. The enzyme catalyses 2 chloride(in) + H(+)(out) = 2 chloride(out) + H(+)(in). Functionally, proton-coupled chloride transporter. Functions as antiport system and exchanges two chloride ions for 1 proton. Probably acts as an electrical shunt for an outwardly-directed proton pump that is linked to amino acid decarboxylation, as part of the extreme acid resistance (XAR) response. The chain is H(+)/Cl(-) exchange transporter ClcA from Shigella boydii serotype 4 (strain Sb227).